The following is a 224-amino-acid chain: Octanoyltransferase (224 aa).

The BPL/LPL catalytic domain maps to 33–213 (GTTAETMLLL…ALQAEFGREA (181 aa)). Residues 51–71 (GKRTTDDERPTDGTPVVDVDR) form a disordered region. Substrate-binding positions include 71–78 (RGGKITWH), 143–145 (AIG), and 156–158 (GFA). C174 acts as the Acyl-thioester intermediate in catalysis.

It belongs to the LipB family.

It localises to the cytoplasm. It catalyses the reaction octanoyl-[ACP] + L-lysyl-[protein] = N(6)-octanoyl-L-lysyl-[protein] + holo-[ACP] + H(+). It functions in the pathway protein modification; protein lipoylation via endogenous pathway; protein N(6)-(lipoyl)lysine from octanoyl-[acyl-carrier-protein]: step 1/2. In terms of biological role, catalyzes the transfer of endogenously produced octanoic acid from octanoyl-acyl-carrier-protein onto the lipoyl domains of lipoate-dependent enzymes. Lipoyl-ACP can also act as a substrate although octanoyl-ACP is likely to be the physiological substrate. This is Octanoyltransferase from Leifsonia xyli subsp. xyli (strain CTCB07).